A 229-amino-acid polypeptide reads, in one-letter code: 2-C-methyl-D-erythritol 4-phosphate cytidylyltransferase (229 aa).

The protein belongs to the IspD/TarI cytidylyltransferase family. IspD subfamily.

The enzyme catalyses 2-C-methyl-D-erythritol 4-phosphate + CTP + H(+) = 4-CDP-2-C-methyl-D-erythritol + diphosphate. Its pathway is isoprenoid biosynthesis; isopentenyl diphosphate biosynthesis via DXP pathway; isopentenyl diphosphate from 1-deoxy-D-xylulose 5-phosphate: step 2/6. Its function is as follows. Catalyzes the formation of 4-diphosphocytidyl-2-C-methyl-D-erythritol from CTP and 2-C-methyl-D-erythritol 4-phosphate (MEP). This Neisseria gonorrhoeae (strain ATCC 700825 / FA 1090) protein is 2-C-methyl-D-erythritol 4-phosphate cytidylyltransferase.